Reading from the N-terminus, the 317-residue chain is Beta-ketoacyl-[acyl-carrier-protein] synthase III (317 aa).

Catalysis depends on residues cysteine 112 and histidine 244. The segment at 245 to 249 (QANLR) is ACP-binding. The active site involves asparagine 274.

The protein belongs to the thiolase-like superfamily. FabH family. In terms of assembly, homodimer.

The protein localises to the cytoplasm. It carries out the reaction malonyl-[ACP] + acetyl-CoA + H(+) = 3-oxobutanoyl-[ACP] + CO2 + CoA. It participates in lipid metabolism; fatty acid biosynthesis. In terms of biological role, catalyzes the condensation reaction of fatty acid synthesis by the addition to an acyl acceptor of two carbons from malonyl-ACP. Catalyzes the first condensation reaction which initiates fatty acid synthesis and may therefore play a role in governing the total rate of fatty acid production. Possesses both acetoacetyl-ACP synthase and acetyl transacylase activities. Its substrate specificity determines the biosynthesis of branched-chain and/or straight-chain of fatty acids. The sequence is that of Beta-ketoacyl-[acyl-carrier-protein] synthase III from Baumannia cicadellinicola subsp. Homalodisca coagulata.